The following is a 324-amino-acid chain: Serine carboxypeptidase II-1 (324 aa).

N-linked (GlcNAc...) asparagine glycosylation occurs at Asn10. The active site involves Ser41. Disulfide bonds link Cys109–Cys121 and Cys145–Cys170. Residues 150-162 (LHRRRLIKGRRPW) constitute a propeptide, linker peptide. A glycan (N-linked (GlcNAc...) asparagine) is linked at Asn191. Residues Asp239 and His291 contribute to the active site.

This sequence belongs to the peptidase S10 family. Carboxypeptidase II is a dimer, where each monomer is composed of two chains linked by a disulfide bond. The linker peptide is endoproteolytically excised during enzyme maturation.

It carries out the reaction Preferential release of a C-terminal arginine or lysine residue.. This is Serine carboxypeptidase II-1 (CXP;2-1) from Hordeum vulgare (Barley).